A 709-amino-acid polypeptide reads, in one-letter code: Potassium-transporting ATPase ATP-binding subunit (709 aa).

The next 4 membrane-spanning stretches (helical) occupy residues 55-75 (VMLVVLVGAVITTLAFLRDLA), 86-106 (GLVAAFLWFTVLFANFAEAMA), 236-256 (IALNILLAGLTIIFLLAVVTL), and 269-289 (VVVLVALLVCLIPTTIGALLS). Catalysis depends on Asp324, which acts as the 4-aspartylphosphate intermediate. Residues Asp361, Glu365, 395-402 (FTAETRMS), and Lys417 each bind ATP. Residues Asp545 and Asp549 each coordinate Mg(2+). Helical transmembrane passes span 615 to 635 (FAIIPAMFVGLYPVLDKLNVM), 643 to 663 (AILSAVIFNALVIVALIPLAL), and 688 to 708 (GLVVPFIGIKLVDLVIVALGV).

This sequence belongs to the cation transport ATPase (P-type) (TC 3.A.3) family. Type IA subfamily. In terms of assembly, the system is composed of three essential subunits: KdpA, KdpB and KdpC.

The protein localises to the cell membrane. It catalyses the reaction K(+)(out) + ATP + H2O = K(+)(in) + ADP + phosphate + H(+). Part of the high-affinity ATP-driven potassium transport (or Kdp) system, which catalyzes the hydrolysis of ATP coupled with the electrogenic transport of potassium into the cytoplasm. This subunit is responsible for energy coupling to the transport system and for the release of the potassium ions to the cytoplasm. This Mycobacterium tuberculosis (strain ATCC 25618 / H37Rv) protein is Potassium-transporting ATPase ATP-binding subunit.